Consider the following 142-residue polypeptide: 3-hydroxyacyl-[acyl-carrier-protein] dehydratase FabZ (142 aa).

The active site involves His-50.

This sequence belongs to the thioester dehydratase family. FabZ subfamily.

The protein localises to the cytoplasm. The enzyme catalyses a (3R)-hydroxyacyl-[ACP] = a (2E)-enoyl-[ACP] + H2O. Functionally, involved in unsaturated fatty acids biosynthesis. Catalyzes the dehydration of short chain beta-hydroxyacyl-ACPs and long chain saturated and unsaturated beta-hydroxyacyl-ACPs. In Clostridium botulinum (strain Alaska E43 / Type E3), this protein is 3-hydroxyacyl-[acyl-carrier-protein] dehydratase FabZ.